A 171-amino-acid chain; its full sequence is Antimicrobial protein CAP18 (171 aa).

An N-terminal signal peptide occupies residues 1 to 29; it reads METHKHGPSLAWWSLLLLLLGLLMPPAIA. Disulfide bonds link cysteine 85/cysteine 96 and cysteine 107/cysteine 124.

It belongs to the cathelicidin family. In terms of tissue distribution, neutrophils.

It localises to the secreted. In terms of biological role, CAP18 binds to the lipid A moiety of bacterial lipopolysaccharides (LPS), a glycolipid present in the outer membrane of all Gram-negative bacteria. Has antibiotic activity. This is Antimicrobial protein CAP18 (CAP18) from Oryctolagus cuniculus (Rabbit).